Here is a 329-residue protein sequence, read N- to C-terminus: Serpentine receptor class alpha-6 (329 aa).

The next 7 helical transmembrane spans lie at 26 to 46 (VDLLAIILAFFASYFAIKIVI), 68 to 88 (LYQISYGIEAIGMLYRGFFML), 104 to 124 (YFKVLMIGTSGMIFGQTGLLI), 143 to 163 (IGVCISLIVLVCSTSSGFIIL), 187 to 207 (NLFSILSTVLTLFNLIVSIFI), 238 to 258 (ICFLALSQFLWMFMYSFGILI), and 273 to 293 (FWIAWCYTMPFIALMFPVLLI).

Belongs to the nematode receptor-like protein sra family.

It localises to the membrane. The protein is Serpentine receptor class alpha-6 (sra-6) of Caenorhabditis elegans.